A 505-amino-acid polypeptide reads, in one-letter code: Putative diacyglycerol O-acyltransferase MT0919 (505 aa).

H167 functions as the Proton acceptor in the catalytic mechanism.

This sequence belongs to the long-chain O-acyltransferase family.

The catalysed reaction is an acyl-CoA + a 1,2-diacyl-sn-glycerol = a triacyl-sn-glycerol + CoA. It functions in the pathway glycerolipid metabolism; triacylglycerol biosynthesis. This chain is Putative diacyglycerol O-acyltransferase MT0919, found in Mycobacterium tuberculosis (strain CDC 1551 / Oshkosh).